A 424-amino-acid polypeptide reads, in one-letter code: Tyrosine--tRNA ligase (424 aa).

Tyr37 lines the L-tyrosine pocket. The short motif at 42–51 (PTADSLHLGH) is the 'HIGH' region element. L-tyrosine contacts are provided by Tyr174 and Gln178. The short motif at 234–238 (KFGKT) is the 'KMSKS' region element. Lys237 lines the ATP pocket. In terms of domain architecture, S4 RNA-binding spans 357 to 414 (TGLIDALVASGLAKSKSEARTFIQSGSVAINGNKAEALDHAIGGDELLYGRFTILRRG).

Belongs to the class-I aminoacyl-tRNA synthetase family. TyrS type 1 subfamily. Homodimer.

The protein resides in the cytoplasm. The catalysed reaction is tRNA(Tyr) + L-tyrosine + ATP = L-tyrosyl-tRNA(Tyr) + AMP + diphosphate + H(+). Functionally, catalyzes the attachment of tyrosine to tRNA(Tyr) in a two-step reaction: tyrosine is first activated by ATP to form Tyr-AMP and then transferred to the acceptor end of tRNA(Tyr). The sequence is that of Tyrosine--tRNA ligase from Dechloromonas aromatica (strain RCB).